A 996-amino-acid polypeptide reads, in one-letter code: UPF0182 protein CE0802 (996 aa).

The next 7 helical transmembrane spans lie at 19-39 (VTWI…TVGF), 63-83 (IILF…AGYF), 115-135 (ILII…QRSW), 176-196 (STLL…LGGI), 212-234 (GARA…TYWL), 262-282 (KIIL…AIFL), and 290-310 (LAVV…PLML). The interval 920-950 (VPDVNATEDADATTDGEDETPAAPAAPAGSE) is disordered. Acidic residues predominate over residues 925-939 (ATEDADATTDGEDET). The segment covering 940-950 (PAAPAAPAGSE) has biased composition (low complexity).

Belongs to the UPF0182 family.

The protein resides in the cell membrane. The chain is UPF0182 protein CE0802 from Corynebacterium efficiens (strain DSM 44549 / YS-314 / AJ 12310 / JCM 11189 / NBRC 100395).